We begin with the raw amino-acid sequence, 687 residues long: FAD-dependent oxidoreductase domain-containing protein 2 (687 aa).

A signal peptide spans 1–22 (MSVIQLVFRLLCVLDLLLAVSA). N-linked (GlcNAc...) asparagine glycans are attached at residues Asn-29 and Asn-305.

The protein belongs to the FOXRED2 family. FAD serves as cofactor. N-glycosylated.

It is found in the endoplasmic reticulum lumen. Probable flavoprotein which may function in endoplasmic reticulum associated degradation (ERAD). May bind non-native proteins in the endoplasmic reticulum and target them to the ubiquitination machinery for subsequent degradation. This is FAD-dependent oxidoreductase domain-containing protein 2 (foxred2) from Danio rerio (Zebrafish).